Reading from the N-terminus, the 264-residue chain is MERVRGACQSPILILLAIVLPFPSTSGPAIHPLIESLAARIRQRRAQLPELSPFALDSVMESISGQLDGEELLISNELHRCRGMRKLHLEIARLGGGLQVLHCVFFPDPRFDLPIFGADIVAGPAGISAAIVDLSPVGLTMPEALLHGLESLPIPAFQQVRELPEWGSIFSPFVQFIRPASSQEESWFVDLADGYLKALISSVIDATPDASDAASTIQRHKSQLSYCIQQKRNDKTRGVLEKAFNPQWADRYIEEILFEDPPPL.

Belongs to the HY2 family.

The enzyme catalyses (2R,3Z)-phycocyanobilin + 4 oxidized [2Fe-2S]-[ferredoxin] = biliverdin IXalpha + 4 reduced [2Fe-2S]-[ferredoxin] + 4 H(+). In terms of biological role, catalyzes the four-electron reduction of biliverdin IX-alpha (2-electron reduction at both the A and D rings); the reaction proceeds via an isolatable 2-electron intermediate, 181,182-dihydrobiliverdin. The sequence is that of Phycocyanobilin:ferredoxin oxidoreductase (pcyA) from Prochlorococcus marinus (strain MIT 9313).